Reading from the N-terminus, the 207-residue chain is Octanoyltransferase (207 aa).

A BPL/LPL catalytic domain is found at 29-204 (DDTADELWLV…ELMVQLGDEE (176 aa)). Residues 68–75 (RGGQVTYH), 135–137 (SLG), and 148–150 (GVA) each bind substrate. The active-site Acyl-thioester intermediate is cysteine 166.

It belongs to the LipB family.

It is found in the cytoplasm. The enzyme catalyses octanoyl-[ACP] + L-lysyl-[protein] = N(6)-octanoyl-L-lysyl-[protein] + holo-[ACP] + H(+). It participates in protein modification; protein lipoylation via endogenous pathway; protein N(6)-(lipoyl)lysine from octanoyl-[acyl-carrier-protein]: step 1/2. Catalyzes the transfer of endogenously produced octanoic acid from octanoyl-acyl-carrier-protein onto the lipoyl domains of lipoate-dependent enzymes. Lipoyl-ACP can also act as a substrate although octanoyl-ACP is likely to be the physiological substrate. This is Octanoyltransferase from Methylococcus capsulatus (strain ATCC 33009 / NCIMB 11132 / Bath).